The following is a 202-amino-acid chain: Imidazole glycerol phosphate synthase subunit HisH (202 aa).

A Glutamine amidotransferase type-1 domain is found at 3-202 (RIVIIDYGLG…KILKNFVEMC (200 aa)). C79 (nucleophile) is an active-site residue. Residues H183 and E185 contribute to the active site.

Heterodimer of HisH and HisF.

It is found in the cytoplasm. The catalysed reaction is 5-[(5-phospho-1-deoxy-D-ribulos-1-ylimino)methylamino]-1-(5-phospho-beta-D-ribosyl)imidazole-4-carboxamide + L-glutamine = D-erythro-1-(imidazol-4-yl)glycerol 3-phosphate + 5-amino-1-(5-phospho-beta-D-ribosyl)imidazole-4-carboxamide + L-glutamate + H(+). The enzyme catalyses L-glutamine + H2O = L-glutamate + NH4(+). The protein operates within amino-acid biosynthesis; L-histidine biosynthesis; L-histidine from 5-phospho-alpha-D-ribose 1-diphosphate: step 5/9. Functionally, IGPS catalyzes the conversion of PRFAR and glutamine to IGP, AICAR and glutamate. The HisH subunit catalyzes the hydrolysis of glutamine to glutamate and ammonia as part of the synthesis of IGP and AICAR. The resulting ammonia molecule is channeled to the active site of HisF. The polypeptide is Imidazole glycerol phosphate synthase subunit HisH (Methanosarcina acetivorans (strain ATCC 35395 / DSM 2834 / JCM 12185 / C2A)).